The chain runs to 173 residues: 3-hydroxydecanoyl-[acyl-carrier-protein] dehydratase (173 aa).

Residue H71 is part of the active site.

The protein belongs to the thioester dehydratase family. FabA subfamily. In terms of assembly, homodimer.

It is found in the cytoplasm. It catalyses the reaction a (3R)-hydroxyacyl-[ACP] = a (2E)-enoyl-[ACP] + H2O. The catalysed reaction is (3R)-hydroxydecanoyl-[ACP] = (2E)-decenoyl-[ACP] + H2O. The enzyme catalyses (2E)-decenoyl-[ACP] = (3Z)-decenoyl-[ACP]. It participates in lipid metabolism; fatty acid biosynthesis. Necessary for the introduction of cis unsaturation into fatty acids. Catalyzes the dehydration of (3R)-3-hydroxydecanoyl-ACP to E-(2)-decenoyl-ACP and then its isomerization to Z-(3)-decenoyl-ACP. Can catalyze the dehydratase reaction for beta-hydroxyacyl-ACPs with saturated chain lengths up to 16:0, being most active on intermediate chain length. This is 3-hydroxydecanoyl-[acyl-carrier-protein] dehydratase from Bradyrhizobium diazoefficiens (strain JCM 10833 / BCRC 13528 / IAM 13628 / NBRC 14792 / USDA 110).